The chain runs to 491 residues: N-succinylglutamate 5-semialdehyde dehydrogenase (491 aa).

Glycine 223–glycine 228 is a binding site for NAD(+). Catalysis depends on residues glutamate 246 and cysteine 280.

This sequence belongs to the aldehyde dehydrogenase family. AstD subfamily.

The catalysed reaction is N-succinyl-L-glutamate 5-semialdehyde + NAD(+) + H2O = N-succinyl-L-glutamate + NADH + 2 H(+). It participates in amino-acid degradation; L-arginine degradation via AST pathway; L-glutamate and succinate from L-arginine: step 4/5. In terms of biological role, catalyzes the NAD-dependent reduction of succinylglutamate semialdehyde into succinylglutamate. The protein is N-succinylglutamate 5-semialdehyde dehydrogenase of Photorhabdus laumondii subsp. laumondii (strain DSM 15139 / CIP 105565 / TT01) (Photorhabdus luminescens subsp. laumondii).